The chain runs to 178 residues: CRISPR system ring nuclease SSO2081 (178 aa).

Residues 105–106 (RK) are transition state stabilizer.

The protein belongs to the cOA ring nuclease family. Homodimer. It depends on Does not require a metal cofactor. as a cofactor.

It localises to the cytoplasm. It catalyses the reaction cyclic tetraadenylate = 2 5'-hydroxy-diadenylate 2',3'-cylic phosphate. Its function is as follows. CRISPR (clustered regularly interspaced short palindromic repeat) is an adaptive immune system that provides protection against mobile genetic elements (viruses, transposable elements and conjugative plasmids). CRISPR clusters contain spacers, sequences complementary to antecedent mobile elements, and target invading nucleic acids. CRISPR clusters are transcribed and processed into CRISPR RNA (crRNA). A nuclease that degrades cyclic oligoadenylates (cOA), second messengers that induce an antiviral state important for defense against invading nucleic acids. Destruction of cOA deactivates the Csx1 ribonuclease, preventing uncontrolled degradation of cellular RNA. Degrades cA4 (a tetraadenylate ring) into a linear diadenylate product with 5'-OH and 2',3'-cyclic phosphate termini. Is 10-fold more active than SSO1393, suggesting this is the major cA4 degradation enzyme. Is highly specific for cA4; it has very poor activity on cA6 and no discernible activity against a number of cyclic dinucleotides. There may be 2 active sites per homodimer. The protein is CRISPR system ring nuclease SSO2081 of Saccharolobus solfataricus (strain ATCC 35092 / DSM 1617 / JCM 11322 / P2) (Sulfolobus solfataricus).